The primary structure comprises 336 residues: N-acetyl-gamma-glutamyl-phosphate reductase (336 aa).

The active site involves Cys-156.

The protein belongs to the NAGSA dehydrogenase family. Type 1 subfamily.

Its subcellular location is the cytoplasm. The enzyme catalyses N-acetyl-L-glutamate 5-semialdehyde + phosphate + NADP(+) = N-acetyl-L-glutamyl 5-phosphate + NADPH + H(+). The protein operates within amino-acid biosynthesis; L-arginine biosynthesis; N(2)-acetyl-L-ornithine from L-glutamate: step 3/4. Its function is as follows. Catalyzes the NADPH-dependent reduction of N-acetyl-5-glutamyl phosphate to yield N-acetyl-L-glutamate 5-semialdehyde. This chain is N-acetyl-gamma-glutamyl-phosphate reductase, found in Moritella abyssi.